A 242-amino-acid chain; its full sequence is Ribonuclease PH (242 aa).

Residues R86 and 124–126 (GTR) contribute to the phosphate site.

The protein belongs to the RNase PH family. Homohexameric ring arranged as a trimer of dimers.

It catalyses the reaction tRNA(n+1) + phosphate = tRNA(n) + a ribonucleoside 5'-diphosphate. Functionally, phosphorolytic 3'-5' exoribonuclease that plays an important role in tRNA 3'-end maturation. Removes nucleotide residues following the 3'-CCA terminus of tRNAs; can also add nucleotides to the ends of RNA molecules by using nucleoside diphosphates as substrates, but this may not be physiologically important. Probably plays a role in initiation of 16S rRNA degradation (leading to ribosome degradation) during starvation. This chain is Ribonuclease PH, found in Caulobacter sp. (strain K31).